The following is a 115-amino-acid chain: UPF0102 protein NGO_1987 (115 aa).

It belongs to the UPF0102 family.

The chain is UPF0102 protein NGO_1987 from Neisseria gonorrhoeae (strain ATCC 700825 / FA 1090).